Consider the following 227-residue polypeptide: Cytochrome c oxidase subunit 2 (227 aa).

The Mitochondrial intermembrane portion of the chain corresponds to 1–14 (MAYPFQLGFQDATS). A helical membrane pass occupies residues 15–45 (PIMEELLHFHDHTLMIVFLISSLVLYIISSM). Over 46–59 (LTTKLTHTSTMDAQ) the chain is Mitochondrial matrix. A helical transmembrane segment spans residues 60–87 (EVETIWTILPAIILILIALPSLRILYMM). Residues 88–227 (DEINNPSLTV…HFEEWSASML (140 aa)) are Mitochondrial intermembrane-facing. Cu cation contacts are provided by histidine 161, cysteine 196, glutamate 198, cysteine 200, histidine 204, and methionine 207. A Mg(2+)-binding site is contributed by glutamate 198.

It belongs to the cytochrome c oxidase subunit 2 family. As to quaternary structure, component of the cytochrome c oxidase (complex IV, CIV), a multisubunit enzyme composed of 14 subunits. The complex is composed of a catalytic core of 3 subunits MT-CO1, MT-CO2 and MT-CO3, encoded in the mitochondrial DNA, and 11 supernumerary subunits COX4I, COX5A, COX5B, COX6A, COX6B, COX6C, COX7A, COX7B, COX7C, COX8 and NDUFA4, which are encoded in the nuclear genome. The complex exists as a monomer or a dimer and forms supercomplexes (SCs) in the inner mitochondrial membrane with NADH-ubiquinone oxidoreductase (complex I, CI) and ubiquinol-cytochrome c oxidoreductase (cytochrome b-c1 complex, complex III, CIII), resulting in different assemblies (supercomplex SCI(1)III(2)IV(1) and megacomplex MCI(2)III(2)IV(2)). Found in a complex with TMEM177, COA6, COX18, COX20, SCO1 and SCO2. Interacts with TMEM177 in a COX20-dependent manner. Interacts with COX20. Interacts with COX16. The cofactor is Cu cation.

The protein resides in the mitochondrion inner membrane. The catalysed reaction is 4 Fe(II)-[cytochrome c] + O2 + 8 H(+)(in) = 4 Fe(III)-[cytochrome c] + 2 H2O + 4 H(+)(out). Its function is as follows. Component of the cytochrome c oxidase, the last enzyme in the mitochondrial electron transport chain which drives oxidative phosphorylation. The respiratory chain contains 3 multisubunit complexes succinate dehydrogenase (complex II, CII), ubiquinol-cytochrome c oxidoreductase (cytochrome b-c1 complex, complex III, CIII) and cytochrome c oxidase (complex IV, CIV), that cooperate to transfer electrons derived from NADH and succinate to molecular oxygen, creating an electrochemical gradient over the inner membrane that drives transmembrane transport and the ATP synthase. Cytochrome c oxidase is the component of the respiratory chain that catalyzes the reduction of oxygen to water. Electrons originating from reduced cytochrome c in the intermembrane space (IMS) are transferred via the dinuclear copper A center (CU(A)) of subunit 2 and heme A of subunit 1 to the active site in subunit 1, a binuclear center (BNC) formed by heme A3 and copper B (CU(B)). The BNC reduces molecular oxygen to 2 water molecules using 4 electrons from cytochrome c in the IMS and 4 protons from the mitochondrial matrix. The protein is Cytochrome c oxidase subunit 2 (MT-CO2) of Equus caballus (Horse).